Here is a 221-residue protein sequence, read N- to C-terminus: Probable nicotinate-nucleotide adenylyltransferase (221 aa).

This sequence belongs to the NadD family.

The enzyme catalyses nicotinate beta-D-ribonucleotide + ATP + H(+) = deamido-NAD(+) + diphosphate. Its pathway is cofactor biosynthesis; NAD(+) biosynthesis; deamido-NAD(+) from nicotinate D-ribonucleotide: step 1/1. Its function is as follows. Catalyzes the reversible adenylation of nicotinate mononucleotide (NaMN) to nicotinic acid adenine dinucleotide (NaAD). The protein is Probable nicotinate-nucleotide adenylyltransferase of Marinomonas sp. (strain MWYL1).